Here is an 863-residue protein sequence, read N- to C-terminus: MQYPFQEVESFWQKFWEEHKSFQTNIRSSKPKFYCLDMFPYPSGAGLHVGHPEGYTATDILSRFKRMKGFEVLHPMGWDAFGLPAERYAMQTGIHPAITTKDNIDNFRRQIQMIGLSYDWSRELSTTDPDYYKFTQWIFIQLYQSWFNPELKKAESINELIRRFSNQGSNGLDYRQFNSEEWKNFSPVEKEKILSDFRLVYQAEIPVNWCEALGTVLANEEVEEWVGKGYEVVRKPMRQYMMRITAYADRLLEDLELVEWPPSTLEMQKNWIGKSEGLEITFPFLKPLQSGLEGIRIFTTRPDTIFGVTYMVVAPEHPIVSEITTPEQKQKVEEYQKTSSLKSDLDRMELNKEKTGVFTGTFVFNPADPSQKIPVWISDYVLYGYGTGAIMAVPAHDQRDFEFARTFGLKIIPVIEGEISEAAFDSKTSTCINSSSSEISINGLDYTSASSKIISWAESKKIGRKKIQFKLRDWLFARQRYWGEPIPLVHYPSGVTKPIPESELPLVLPNLEEFKPSGTGESPLALAKDWLQYKDPSTGEIGTRETNTMPQWAGSCWYYLRYIDPKNGRFLCDPELEKKWMPVNLYVGGSEHAVLHLLYSRFWHKFLFDIGAVSTKEPFDKLIHQGLILGEDKRKMSKSLGNVVNPDDVIKEYGADSLRLFEMFMGPLEMVKPWSTRGVEGVFRFLNRIWRLFHSGSQESFRLDDVEPTPEELKILHKTIQKVNEDIPNFSFNTAIAQLMIFVNEFTPSDRRPKKVLESFILLLAPFAPHIAEELWKRSGKMESLSYEKFPEADPQYLVESEILIVVQVNGKLRDEFKAPKDVSQSDAISMAKNLDKIKGILEGKTIRKEIYVPGKLVNLVIG.

Residues 40–51 carry the 'HIGH' region motif; the sequence is PYPSGAGLHVGH. The short motif at 635–639 is the 'KMSKS' region element; it reads KMSKS. K638 contacts ATP.

It belongs to the class-I aminoacyl-tRNA synthetase family.

It is found in the cytoplasm. It carries out the reaction tRNA(Leu) + L-leucine + ATP = L-leucyl-tRNA(Leu) + AMP + diphosphate. This Leptospira interrogans serogroup Icterohaemorrhagiae serovar copenhageni (strain Fiocruz L1-130) protein is Leucine--tRNA ligase.